A 645-amino-acid polypeptide reads, in one-letter code: Glucans biosynthesis glucosyltransferase H (645 aa).

The tract at residues 1 to 28 (MDGTVTLSPAPTDLPPVSSLDAGQPTLP) is disordered. Helical transmembrane passes span 64 to 84 (LIGGTLTATAVAVWVMLSVLW), 98 to 118 (LFVLLFAWIAMSFASAVAGFI), 423 to 443 (APMWGMLMLVGIGIPLAGAGI), 465 to 485 (AIWIFVCTMFVLLAPKLLGYI), 504 to 524 (ALSILLETVLAALMAPVVMYL), 558 to 578 (SYGGLSVFGLFMGTLAYLVSP), and 580 to 600 (LAAWMAPVIVGMVVSIPVVAV).

Belongs to the glycosyltransferase 2 family. OpgH subfamily.

Its subcellular location is the cell inner membrane. It functions in the pathway glycan metabolism; osmoregulated periplasmic glucan (OPG) biosynthesis. In terms of biological role, involved in the biosynthesis of osmoregulated periplasmic glucans (OPGs). The protein is Glucans biosynthesis glucosyltransferase H of Xanthomonas campestris pv. campestris (strain 8004).